The following is a 122-amino-acid chain: UPF0482 protein Spro_2288 (122 aa).

The signal sequence occupies residues 1–31 (MKTLSTQRLLRGMLPVAMLMLMGAWQAPALA). The interval 46-71 (SNSGAMSTEAARQSKQQFNDTKSLRN) is disordered.

The protein belongs to the UPF0482 family.

This is UPF0482 protein Spro_2288 from Serratia proteamaculans (strain 568).